Consider the following 217-residue polypeptide: FMN-dependent NADH:quinone oxidoreductase (217 aa).

FMN contacts are provided by residues Ser-10 and 16 to 18 (SVS).

The protein belongs to the azoreductase type 1 family. As to quaternary structure, homodimer. It depends on FMN as a cofactor.

It carries out the reaction 2 a quinone + NADH + H(+) = 2 a 1,4-benzosemiquinone + NAD(+). The enzyme catalyses N,N-dimethyl-1,4-phenylenediamine + anthranilate + 2 NAD(+) = 2-(4-dimethylaminophenyl)diazenylbenzoate + 2 NADH + 2 H(+). Functionally, quinone reductase that provides resistance to thiol-specific stress caused by electrophilic quinones. Its function is as follows. Also exhibits azoreductase activity. Catalyzes the reductive cleavage of the azo bond in aromatic azo compounds to the corresponding amines. This chain is FMN-dependent NADH:quinone oxidoreductase, found in Polaromonas naphthalenivorans (strain CJ2).